The chain runs to 1055 residues: Endo-1,4-beta-xylanase A (1055 aa).

The signal sequence occupies residues 1–29 (MRKKRRGFLNASTAVLVGILAGFLGVVLA). The a stretch occupies residues 30-357 (ATGALGFAVR…TTSAEIKLEM (328 aa)). Residues 360 to 688 (EEEIPALKDV…KLAYWAIVAP (329 aa)) enclose the GH10 domain. Residue Glu498 is the Proton donor of the active site. Residue Glu604 is the Nucleophile of the active site. CBM-cenC domains lie at 720 to 851 (PIEI…TNSQ) and 895 to 1040 (KSVA…PTNN).

It belongs to the glycosyl hydrolase 10 (cellulase F) family.

It carries out the reaction Endohydrolysis of (1-&gt;4)-beta-D-xylosidic linkages in xylans.. This Thermotoga neapolitana protein is Endo-1,4-beta-xylanase A (xynA).